The primary structure comprises 158 residues: Low molecular weight phosphotyrosine protein phosphatase (158 aa).

A2 bears the N-acetylalanine mark. C13 (nucleophile) is an active-site residue. R19 is an active-site residue. D130 serves as the catalytic Proton donor. 2 positions are modified to phosphotyrosine: Y132 and Y133.

It belongs to the low molecular weight phosphotyrosine protein phosphatase family. In terms of assembly, interacts with EPHA2; dephosphorylates EPHA2. Interacts with EPHB1. Interacts with the SH3 domain of SPTAN1. There is no interaction observed for isoforms 2 or 3. In terms of processing, phosphorylated by LCK. Phosphorylation at Tyr-132 increases its phosphatase activity. Not phosphorylated. Expressed in T-lymphocytes.

It localises to the cytoplasm. The catalysed reaction is O-phospho-L-tyrosyl-[protein] + H2O = L-tyrosyl-[protein] + phosphate. It catalyses the reaction a phosphate monoester + H2O = an alcohol + phosphate. With respect to regulation, inhibited by sulfhydryl reagents. In terms of biological role, acts on tyrosine phosphorylated proteins, low-MW aryl phosphates and natural and synthetic acyl phosphates with differences in substrate specificity between isoform 1 and isoform 2. Does not possess phosphatase activity. This chain is Low molecular weight phosphotyrosine protein phosphatase, found in Homo sapiens (Human).